Here is a 435-residue protein sequence, read N- to C-terminus: Metacaspase-1A (435 aa).

Disordered stretches follow at residues 1 to 46 (MQNH…APPP) and 106 to 129 (YQNPYSHGHQGGPPPPPTDPVAFG). A compositionally biased stretch (pro residues) spans 36–46 (SPQPGYGAPPP). Active-site residues include histidine 231 and cysteine 287.

Belongs to the peptidase C14B family.

Its function is as follows. Involved in cell death (apoptosis). This Neosartorya fischeri (strain ATCC 1020 / DSM 3700 / CBS 544.65 / FGSC A1164 / JCM 1740 / NRRL 181 / WB 181) (Aspergillus fischerianus) protein is Metacaspase-1A (casA).